Consider the following 580-residue polypeptide: MVLRIRRIKKLAPLIFTSLLSLIVLFRVYRQYPFSDHFETRREDDRSGNVHCFSRLRQIEEYEKPELTSKFYEPNRWKSFISYVTRSRKDVKTVSRSLSNLDLYQKCSKEIRADQDISLLHSIETKLFPYINFTALNSEQSHNFWPVHTRFDGTKYRGQVLQFSSENNSFIGTSPIEFKASEPFWENWLNSALQRNSKGVVMSVSEYLVADTIRLIRVLRLLNNSLPIEIVHKSDLHESSQQLLIAAARESGSLNYPPQELWFLDVKDMLNDEYLARFKRFSNKWLAITFCSFQIPIFLDSDTVPFVPLDTLYEIDGFKRTGTLFFKDRSFPTSKLSPLQVKVLKQIINNSLDVSSDSEQGFEILKHNLNDEMAIDAIEALIFKKQKHYMDSGLVIFDKQKHFFCLPIAIMLQFSPIQEFFHGDKEWFWLSLFISKKEFTFYPIEASNVGRLEKPETLESSTICSTQLSHTDVYGNLLWLNGGLSVCKKNCWNYDFTKRKEIAAKYKSVDELRNYYQSPVKLEAVIIPDVSKSPWSQQSECVMYSYCTHYRKGQYGKLIEFTDSQKKYYEKVVELWNKVV.

At 1-10 (MVLRIRRIKK) the chain is on the cytoplasmic side. A helical; Signal-anchor for type II membrane protein membrane pass occupies residues 11–29 (LAPLIFTSLLSLIVLFRVY). Over 30-580 (RQYPFSDHFE…KVVELWNKVV (551 aa)) the chain is Lumenal. Residues Asn132, Asn167, Asn223, and Asn349 are each glycosylated (N-linked (GlcNAc...) asparagine).

Belongs to the MNN1/MNT family.

The protein localises to the membrane. In Saccharomyces cerevisiae (strain ATCC 204508 / S288c) (Baker's yeast), this protein is Probable alpha-1,3-mannosyltransferase MNT4 (MNT4).